The following is a 293-amino-acid chain: Probable metal transport system membrane protein CPn_0543/CP_0209/CPj0543/CpB0565 (293 aa).

The next 7 membrane-spanning stretches (helical) occupy residues 12–32, 41–61, 68–88, 101–121, 140–160, 183–203, and 253–273; these read LLILLPTFLAALGASVAGGVM, IVSISGSISHAILGGIGLTLW, LSFFPMYGAIVGAIFLALCIG, LIAMIWSVGMAIGIIFISRLP, PSDLYSLGIFDLLVLGIVVLC, LWYFLLLVLTAITIVMLIYVM, and FPVGPTISLLMGLGYTASLCV.

The protein belongs to the ABC-3 integral membrane protein family.

It is found in the cell inner membrane. Its function is as follows. Part of an ATP-driven transport system CPn_0541/CPn_0542/CPn_0543 for a metal. This chain is Probable metal transport system membrane protein CPn_0543/CP_0209/CPj0543/CpB0565, found in Chlamydia pneumoniae (Chlamydophila pneumoniae).